The following is a 486-amino-acid chain: UDP-N-acetylmuramate--L-alanine ligase (486 aa).

Residue 132–138 (GTHGKTT) coordinates ATP.

Belongs to the MurCDEF family.

The protein resides in the cytoplasm. It catalyses the reaction UDP-N-acetyl-alpha-D-muramate + L-alanine + ATP = UDP-N-acetyl-alpha-D-muramoyl-L-alanine + ADP + phosphate + H(+). It participates in cell wall biogenesis; peptidoglycan biosynthesis. Functionally, cell wall formation. The sequence is that of UDP-N-acetylmuramate--L-alanine ligase from Halorhodospira halophila (strain DSM 244 / SL1) (Ectothiorhodospira halophila (strain DSM 244 / SL1)).